The sequence spans 260 residues: 1-(5-phosphoribosyl)-5-[(5-phosphoribosylamino)methylideneamino] imidazole-4-carboxamide isomerase (260 aa).

The active-site Proton acceptor is the Asp8. Catalysis depends on Asp130, which acts as the Proton donor.

Belongs to the HisA/HisF family.

It localises to the cytoplasm. It carries out the reaction 1-(5-phospho-beta-D-ribosyl)-5-[(5-phospho-beta-D-ribosylamino)methylideneamino]imidazole-4-carboxamide = 5-[(5-phospho-1-deoxy-D-ribulos-1-ylimino)methylamino]-1-(5-phospho-beta-D-ribosyl)imidazole-4-carboxamide. It functions in the pathway amino-acid biosynthesis; L-histidine biosynthesis; L-histidine from 5-phospho-alpha-D-ribose 1-diphosphate: step 4/9. This is 1-(5-phosphoribosyl)-5-[(5-phosphoribosylamino)methylideneamino] imidazole-4-carboxamide isomerase from Chlorobaculum parvum (strain DSM 263 / NCIMB 8327) (Chlorobium vibrioforme subsp. thiosulfatophilum).